Consider the following 408-residue polypeptide: Peptidase T (408 aa).

His78 provides a ligand contact to Zn(2+). Residue Asp80 is part of the active site. Residue Asp140 participates in Zn(2+) binding. The active-site Proton acceptor is Glu173. The Zn(2+) site is built by Glu174, Asp196, and His379.

Belongs to the peptidase M20B family. Requires Zn(2+) as cofactor.

Its subcellular location is the cytoplasm. The catalysed reaction is Release of the N-terminal residue from a tripeptide.. Functionally, cleaves the N-terminal amino acid of tripeptides. The sequence is that of Peptidase T from Escherichia coli (strain UTI89 / UPEC).